A 291-amino-acid polypeptide reads, in one-letter code: 2-C-methyl-D-erythritol 4-phosphate cytidylyltransferase (291 aa).

Residues 1–23 (MTERDFDTPVETPTVQPAPAQGT) are disordered.

This sequence belongs to the IspD/TarI cytidylyltransferase family. IspD subfamily.

The catalysed reaction is 2-C-methyl-D-erythritol 4-phosphate + CTP + H(+) = 4-CDP-2-C-methyl-D-erythritol + diphosphate. The protein operates within isoprenoid biosynthesis; isopentenyl diphosphate biosynthesis via DXP pathway; isopentenyl diphosphate from 1-deoxy-D-xylulose 5-phosphate: step 2/6. Its function is as follows. Catalyzes the formation of 4-diphosphocytidyl-2-C-methyl-D-erythritol from CTP and 2-C-methyl-D-erythritol 4-phosphate (MEP). The polypeptide is 2-C-methyl-D-erythritol 4-phosphate cytidylyltransferase (Bifidobacterium longum subsp. infantis (strain ATCC 15697 / DSM 20088 / JCM 1222 / NCTC 11817 / S12)).